The following is a 318-amino-acid chain: NADH-ubiquinone oxidoreductase chain 1 (318 aa).

8 helical membrane-spanning segments follow: residues F2–L22, M70–P90, L100–G120, L146–I166, H171–A191, L222–F242, L254–S276, and L294–I314.

The protein belongs to the complex I subunit 1 family. In terms of assembly, core subunit of respiratory chain NADH dehydrogenase (Complex I) which is composed of 45 different subunits.

It localises to the mitochondrion inner membrane. The enzyme catalyses a ubiquinone + NADH + 5 H(+)(in) = a ubiquinol + NAD(+) + 4 H(+)(out). In terms of biological role, core subunit of the mitochondrial membrane respiratory chain NADH dehydrogenase (Complex I) which catalyzes electron transfer from NADH through the respiratory chain, using ubiquinone as an electron acceptor. Essential for the catalytic activity and assembly of complex I. The sequence is that of NADH-ubiquinone oxidoreductase chain 1 (MT-ND1) from Ceratotherium simum (White rhinoceros).